A 247-amino-acid chain; its full sequence is Large ribosomal subunit protein uL30z (247 aa).

This sequence belongs to the universal ribosomal protein uL30 family.

This is Large ribosomal subunit protein uL30z (RPL7A) from Arabidopsis thaliana (Mouse-ear cress).